We begin with the raw amino-acid sequence, 248 residues long: UPF0246 protein A1I_02510 (248 aa).

This sequence belongs to the UPF0246 family.

This Rickettsia bellii (strain OSU 85-389) protein is UPF0246 protein A1I_02510.